We begin with the raw amino-acid sequence, 145 residues long: Large ribosomal subunit protein uL13 (145 aa).

The protein belongs to the universal ribosomal protein uL13 family. As to quaternary structure, part of the 50S ribosomal subunit.

In terms of biological role, this protein is one of the early assembly proteins of the 50S ribosomal subunit, although it is not seen to bind rRNA by itself. It is important during the early stages of 50S assembly. The protein is Large ribosomal subunit protein uL13 of Bacillus cereus (strain ZK / E33L).